The following is an 89-amino-acid chain: Small ribosomal subunit protein uS15 (89 aa).

Belongs to the universal ribosomal protein uS15 family. As to quaternary structure, part of the 30S ribosomal subunit. Forms a bridge to the 50S subunit in the 70S ribosome, contacting the 23S rRNA.

Functionally, one of the primary rRNA binding proteins, it binds directly to 16S rRNA where it helps nucleate assembly of the platform of the 30S subunit by binding and bridging several RNA helices of the 16S rRNA. Its function is as follows. Forms an intersubunit bridge (bridge B4) with the 23S rRNA of the 50S subunit in the ribosome. The protein is Small ribosomal subunit protein uS15 of Halalkalibacterium halodurans (strain ATCC BAA-125 / DSM 18197 / FERM 7344 / JCM 9153 / C-125) (Bacillus halodurans).